A 688-amino-acid polypeptide reads, in one-letter code: GTPase IMAP family member 8 (688 aa).

Residues 1 to 14 are compositionally biased toward low complexity; sequence MATSSHQGAAAGSQ. Positions 1 to 42 are disordered; sequence MATSSHQGAAAGSQAEHRSCEASVGQGERPSASQGQEGNFKQ. Polar residues predominate over residues 31–42; that stretch reads SASQGQEGNFKQ. AIG1-type G domains lie at 46-247, 282-472, and 473-677; these read TSTL…MESS, MPEL…VIRE, and KELL…GQLK. The tract at residues 55–62 is G1; it reads GKQGAGKS. GTP is bound by residues 55-63 and Ser76; that span reads GKQGAGKSA. The interval 82-86 is G2; that stretch reads MVTDR. The interval 103 to 106 is G3; the sequence is DTPD. The interval 172 to 175 is G4; sequence TRED. Residues 173–175 and Asn209 contribute to the GTP site; that span reads RED. The segment at 208–210 is G5; the sequence is NNK.

Belongs to the TRAFAC class TrmE-Era-EngA-EngB-Septin-like GTPase superfamily. AIG1/Toc34/Toc159-like paraseptin GTPase family. IAN subfamily. In terms of tissue distribution, abundantly expressed in the thymus (in thymocytes), spleen (in splenocytes), lymph node, followed by bone marrow and lung.

It is found in the endoplasmic reticulum. The protein localises to the golgi apparatus. The protein resides in the mitochondrion. It localises to the cytoplasm. Its subcellular location is the cytosol. In terms of biological role, exerts an anti-apoptotic effect in the immune system and is involved in responses to infections. In Mus musculus (Mouse), this protein is GTPase IMAP family member 8 (Gimap8).